The following is a 795-amino-acid chain: Levansucrase (795 aa).

Residues 1–36 (METKVRKKMYKKGKFWVVATITTAMLTGIGLSSVQA) form the signal peptide. 2 stretches are compositionally biased toward polar residues: residues 42–66 (TQVS…SAAE) and 112–130 (QAAT…GQTN). Disordered regions lie at residues 42-83 (TQVS…NPAA) and 103-138 (ESKA…ATKE). Trp-245, Asp-246, and Ser-315 together coordinate sucrose. The active-site Nucleophile is Asp-246. Position 394 (Asp-394) interacts with Ca(2+). The sucrose site is built by Arg-399 and Asp-400. Ca(2+) contacts are provided by Gln-425, Asn-464, and Asp-496. Glu-497 provides a ligand contact to sucrose. Glu-499 serves as the catalytic Proton donor/acceptor. Residue Arg-517 coordinates sucrose. The chain crosses the membrane as a helical span at residues 774-794 (GNSFFAALLALFSAFCVSIGF).

It belongs to the glycosyl hydrolase 68 family.

It is found in the cell membrane. It localises to the cell surface. It carries out the reaction [6)-beta-D-fructofuranosyl-(2-&gt;](n) alpha-D-glucopyranoside + sucrose = [6)-beta-D-fructofuranosyl-(2-&gt;](n+1) alpha-D-glucopyranoside + D-glucose. Its activity is regulated as follows. Ca(2+) may play an important structural role and promote stability of levansucrase. In terms of biological role, catalyzes the synthesis of levan, a fructose polymer, by transferring the fructosyl moiety from sucrose to a growing acceptor molecule. Also displays sucrose hydrolase activity. This chain is Levansucrase, found in Streptococcus mutans serotype c (strain ATCC 700610 / UA159).